The sequence spans 485 residues: Cyclic GMP-AMP synthase-like receptor (485 aa).

ATP is bound by residues Ser70 and Glu82–Asp84. Positions 82, 84, and 204 each coordinate Mg(2+). GTP-binding positions include Asp204 and Arg247–Glu254. Positions 271 and 274 each coordinate ATP. 2 residues coordinate Mn(2+): Ile298 and Asp304.

This sequence belongs to the mab-21 family. It depends on Mg(2+) as a cofactor. Mn(2+) is required as a cofactor.

It carries out the reaction GTP + ATP = 2',3'-cGAMP + 2 diphosphate. The catalysed reaction is GTP + ATP = pppGp(2'-5')A + diphosphate. The enzyme catalyses pppGp(2'-5')A = 2',3'-cGAMP + diphosphate. Its function is as follows. Nucleotidyltransferase that catalyzes the formation of cyclic GMP-AMP (2',3'-cGAMP) from ATP and GTP and plays a key role in innate immunity. Directly binds some unknown ligand, activating the nucleotidyltransferase activity, leading to synthesis of 2',3'-cGAMP, a second messenger that binds to and activates Sting, thereby triggering the immune response via activation of the NF-kappa-B transcription factor. The chain is Cyclic GMP-AMP synthase-like receptor from Trichogramma pretiosum (Parasitoid wasp).